A 726-amino-acid polypeptide reads, in one-letter code: WD repeat and coiled-coil-containing protein (726 aa).

WD repeat units lie at residues 55 to 98 (GQFE…LDKN) and 154 to 194 (KSSG…LNAC). Positions 503–571 (SYDGDQSPTS…SSPPNFIKHG (69 aa)) are disordered. The segment covering 506-515 (GDQSPTSSAN) has biased composition (polar residues). A compositionally biased stretch (basic and acidic residues) spans 517–535 (FDDKRSKLRVESLDTEPKN). The segment covering 550-565 (SRPTSPKSECQKSSPP) has biased composition (polar residues). The stretch at 581 to 609 (SISRNVERLCCNFAHLQQHLSELTDITRN) forms a coiled coil.

In Xenopus tropicalis (Western clawed frog), this protein is WD repeat and coiled-coil-containing protein (wdcp).